Here is a 72-residue protein sequence, read N- to C-terminus: Large ribosomal subunit protein bL31 (72 aa).

Belongs to the bacterial ribosomal protein bL31 family. Type A subfamily. In terms of assembly, part of the 50S ribosomal subunit.

Functionally, binds the 23S rRNA. The sequence is that of Large ribosomal subunit protein bL31 from Deinococcus deserti (strain DSM 17065 / CIP 109153 / LMG 22923 / VCD115).